Reading from the N-terminus, the 282-residue chain is Acetyl-coenzyme A carboxylase carboxyl transferase subunit beta (282 aa).

Positions 25–282 (VWRKCPHCNE…SQMLRIFMKQ (258 aa)) constitute a CoA carboxyltransferase N-terminal domain. Residues cysteine 29, cysteine 32, cysteine 48, and cysteine 51 each coordinate Zn(2+). A C4-type zinc finger spans residues 29–51 (CPHCNEIIYAKEIERNLNVCPKC).

Belongs to the AccD/PCCB family. Acetyl-CoA carboxylase is a heterohexamer composed of biotin carboxyl carrier protein (AccB), biotin carboxylase (AccC) and two subunits each of ACCase subunit alpha (AccA) and ACCase subunit beta (AccD). Zn(2+) is required as a cofactor.

It is found in the cytoplasm. The enzyme catalyses N(6)-carboxybiotinyl-L-lysyl-[protein] + acetyl-CoA = N(6)-biotinyl-L-lysyl-[protein] + malonyl-CoA. It functions in the pathway lipid metabolism; malonyl-CoA biosynthesis; malonyl-CoA from acetyl-CoA: step 1/1. Functionally, component of the acetyl coenzyme A carboxylase (ACC) complex. Biotin carboxylase (BC) catalyzes the carboxylation of biotin on its carrier protein (BCCP) and then the CO(2) group is transferred by the transcarboxylase to acetyl-CoA to form malonyl-CoA. The polypeptide is Acetyl-coenzyme A carboxylase carboxyl transferase subunit beta (Syntrophotalea carbinolica (strain DSM 2380 / NBRC 103641 / GraBd1) (Pelobacter carbinolicus)).